We begin with the raw amino-acid sequence, 464 residues long: Mothers against decapentaplegic homolog 5 (464 aa).

The MH1 domain occupies 13–137 (PAVKRLLGWK…YKRVESPVLP (125 aa)). Zn(2+) contacts are provided by C65, C110, C122, and H127. A disordered region spans residues 166 to 258 (HMPLNATFPE…LAPQNMPRGD (93 aa)). A compositionally biased stretch (polar residues) spans 173 to 183 (FPESFQQHSGG). Residues 199–216 (ASSGTYPNSPASSGPSSP) are compositionally biased toward low complexity. Positions 237 to 251 (QDGSQSMETGSSLAP) are enriched in polar residues. One can recognise an MH2 domain in the interval 270-464 (WCSIVYYELN…SPLNPISSVS (195 aa)).

It belongs to the dwarfin/SMAD family. In terms of assembly, may form trimers with the co-SMAD SMAD4.

The protein resides in the cytoplasm. The protein localises to the nucleus. In terms of biological role, involved in ventralization. May mediate Bmp2b signaling during early phases of embryonic dorsal-ventral pattern formation. Required for initiation of Smad1 expression during gastrulation. The polypeptide is Mothers against decapentaplegic homolog 5 (smad5) (Danio rerio (Zebrafish)).